A 139-amino-acid polypeptide reads, in one-letter code: Transcription antitermination protein NusB (139 aa).

Belongs to the NusB family.

Its function is as follows. Involved in transcription antitermination. Required for transcription of ribosomal RNA (rRNA) genes. Binds specifically to the boxA antiterminator sequence of the ribosomal RNA (rrn) operons. This Limosilactobacillus fermentum (strain NBRC 3956 / LMG 18251) (Lactobacillus fermentum) protein is Transcription antitermination protein NusB.